The primary structure comprises 556 residues: Membrane protein insertase YidC (556 aa).

5 consecutive transmembrane segments (helical) span residues Ile-6 to Asp-26, Leu-332 to Met-352, Val-358 to Tyr-378, Leu-428 to Leu-448, and Val-501 to Val-521.

This sequence belongs to the OXA1/ALB3/YidC family. Type 1 subfamily. As to quaternary structure, interacts with the Sec translocase complex via SecD. Specifically interacts with transmembrane segments of nascent integral membrane proteins during membrane integration.

It localises to the cell inner membrane. Its function is as follows. Required for the insertion and/or proper folding and/or complex formation of integral membrane proteins into the membrane. Involved in integration of membrane proteins that insert both dependently and independently of the Sec translocase complex, as well as at least some lipoproteins. Aids folding of multispanning membrane proteins. The protein is Membrane protein insertase YidC of Legionella pneumophila (strain Corby).